A 682-amino-acid polypeptide reads, in one-letter code: Tetratricopeptide repeat protein 39B (682 aa).

2 TPR repeats span residues 393–426 (SLVLFYHARIELLKGNLEEAQEVFQKCISVQEEW) and 626–659 (PFTLFELASLYKSQGEIDKAIKFLETARNNYKDY).

The protein belongs to the TTC39 family.

In terms of biological role, regulates high density lipoprotein (HDL) cholesterol metabolism by promoting the ubiquitination and degradation of the oxysterols receptors LXR (NR1H2 and NR1H3). The chain is Tetratricopeptide repeat protein 39B from Homo sapiens (Human).